Consider the following 445-residue polypeptide: Phosphoglucosamine mutase 1 (445 aa).

The active-site Phosphoserine intermediate is S102. Residues S102, D241, D243, and D245 each contribute to the Mg(2+) site. S102 carries the post-translational modification Phosphoserine.

This sequence belongs to the phosphohexose mutase family. Mg(2+) serves as cofactor. Activated by phosphorylation.

It carries out the reaction alpha-D-glucosamine 1-phosphate = D-glucosamine 6-phosphate. Catalyzes the conversion of glucosamine-6-phosphate to glucosamine-1-phosphate. In Shewanella amazonensis (strain ATCC BAA-1098 / SB2B), this protein is Phosphoglucosamine mutase 1.